Consider the following 211-residue polypeptide: Envelope protein UL45 homolog (211 aa).

The Intravirion portion of the chain corresponds to 1 to 46 (MMSPTPEDDRDLVVVRGRLRMMDNGAEHDRERRSYTAWPHLCCGCT). A helical; Signal-anchor for type II membrane protein transmembrane segment spans residues 47–67 (IGIILTMFVIATTLLLASLFA). Residues 68–211 (FSYMSLESGT…SSILSNAIMK (144 aa)) are Virion surface-facing. 2 N-linked (GlcNAc...) asparagine; by host glycosylation sites follow: asparagine 96 and asparagine 133.

The protein belongs to the herpesviridae HHV-1 UL45 family.

It localises to the virion membrane. The polypeptide is Envelope protein UL45 homolog (UL45H) (Gallid herpesvirus 2 (strain Chicken/Md5/ATCC VR-987) (GaHV-2)).